The chain runs to 465 residues: ATP synthase subunit beta (465 aa).

152-159 contributes to the ATP binding site; the sequence is GGAGVGKT.

This sequence belongs to the ATPase alpha/beta chains family. As to quaternary structure, F-type ATPases have 2 components, CF(1) - the catalytic core - and CF(0) - the membrane proton channel. CF(1) has five subunits: alpha(3), beta(3), gamma(1), delta(1), epsilon(1). CF(0) has three main subunits: a(1), b(2) and c(9-12). The alpha and beta chains form an alternating ring which encloses part of the gamma chain. CF(1) is attached to CF(0) by a central stalk formed by the gamma and epsilon chains, while a peripheral stalk is formed by the delta and b chains.

The protein resides in the cell inner membrane. The enzyme catalyses ATP + H2O + 4 H(+)(in) = ADP + phosphate + 5 H(+)(out). Produces ATP from ADP in the presence of a proton gradient across the membrane. The catalytic sites are hosted primarily by the beta subunits. This chain is ATP synthase subunit beta, found in Campylobacter jejuni subsp. jejuni serotype O:6 (strain 81116 / NCTC 11828).